Here is a 510-residue protein sequence, read N- to C-terminus: 2,3-bisphosphoglycerate-independent phosphoglycerate mutase (510 aa).

Aspartate 12 and serine 62 together coordinate Mn(2+). Serine 62 functions as the Phosphoserine intermediate in the catalytic mechanism. Substrate is bound by residues histidine 121, 151-152 (RD), arginine 183, arginine 189, 258-261 (RPDR), and lysine 331. 5 residues coordinate Mn(2+): aspartate 398, histidine 402, aspartate 439, histidine 440, and histidine 458.

This sequence belongs to the BPG-independent phosphoglycerate mutase family. As to quaternary structure, monomer. The cofactor is Mn(2+).

It catalyses the reaction (2R)-2-phosphoglycerate = (2R)-3-phosphoglycerate. It participates in carbohydrate degradation; glycolysis; pyruvate from D-glyceraldehyde 3-phosphate: step 3/5. In terms of biological role, catalyzes the interconversion of 2-phosphoglycerate and 3-phosphoglycerate. The protein is 2,3-bisphosphoglycerate-independent phosphoglycerate mutase of Clostridioides difficile (strain 630) (Peptoclostridium difficile).